The following is a 351-amino-acid chain: DNA polymerase IV (351 aa).

The UmuC domain occupies 4 to 185; sequence IIHVDMDCFF…LPLAKIPGVG (182 aa). 2 residues coordinate Mg(2+): Asp-8 and Asp-103. Residue Glu-104 is part of the active site.

This sequence belongs to the DNA polymerase type-Y family. In terms of assembly, monomer. Mg(2+) is required as a cofactor.

It localises to the cytoplasm. The catalysed reaction is DNA(n) + a 2'-deoxyribonucleoside 5'-triphosphate = DNA(n+1) + diphosphate. Functionally, poorly processive, error-prone DNA polymerase involved in untargeted mutagenesis. Copies undamaged DNA at stalled replication forks, which arise in vivo from mismatched or misaligned primer ends. These misaligned primers can be extended by PolIV. Exhibits no 3'-5' exonuclease (proofreading) activity. May be involved in translesional synthesis, in conjunction with the beta clamp from PolIII. The polypeptide is DNA polymerase IV (Escherichia coli O9:H4 (strain HS)).